The chain runs to 225 residues: Phosphoribosylformylglycinamidine synthase subunit PurQ (225 aa).

The Glutamine amidotransferase type-1 domain occupies Phe6–Ala225. Cys89 acts as the Nucleophile in catalysis. Active-site residues include His198 and Glu200.

As to quaternary structure, part of the FGAM synthase complex composed of 1 PurL, 1 PurQ and 2 PurS subunits.

The protein localises to the cytoplasm. It carries out the reaction N(2)-formyl-N(1)-(5-phospho-beta-D-ribosyl)glycinamide + L-glutamine + ATP + H2O = 2-formamido-N(1)-(5-O-phospho-beta-D-ribosyl)acetamidine + L-glutamate + ADP + phosphate + H(+). It catalyses the reaction L-glutamine + H2O = L-glutamate + NH4(+). Its pathway is purine metabolism; IMP biosynthesis via de novo pathway; 5-amino-1-(5-phospho-D-ribosyl)imidazole from N(2)-formyl-N(1)-(5-phospho-D-ribosyl)glycinamide: step 1/2. Part of the phosphoribosylformylglycinamidine synthase complex involved in the purines biosynthetic pathway. Catalyzes the ATP-dependent conversion of formylglycinamide ribonucleotide (FGAR) and glutamine to yield formylglycinamidine ribonucleotide (FGAM) and glutamate. The FGAM synthase complex is composed of three subunits. PurQ produces an ammonia molecule by converting glutamine to glutamate. PurL transfers the ammonia molecule to FGAR to form FGAM in an ATP-dependent manner. PurS interacts with PurQ and PurL and is thought to assist in the transfer of the ammonia molecule from PurQ to PurL. The protein is Phosphoribosylformylglycinamidine synthase subunit PurQ of Synechococcus sp. (strain JA-2-3B'a(2-13)) (Cyanobacteria bacterium Yellowstone B-Prime).